A 267-amino-acid polypeptide reads, in one-letter code: 5'-nucleotidase SurE (267 aa).

Residues D9, D10, S40, and N97 each coordinate a divalent metal cation.

Belongs to the SurE nucleotidase family. A divalent metal cation serves as cofactor.

The protein resides in the cytoplasm. It carries out the reaction a ribonucleoside 5'-phosphate + H2O = a ribonucleoside + phosphate. Nucleotidase that shows phosphatase activity on nucleoside 5'-monophosphates. This chain is 5'-nucleotidase SurE, found in Helicobacter pylori (strain P12).